Consider the following 169-residue polypeptide: MFGLTTLAANKLPLGNMLFIIISFLVLMVILKKVAYGPLTKVLDERAEKISTDIDGAESARQEAENLAAQRQSELADTRQQATKVVADAKASAQKQSDALVAVAAERANTINQQAQTDAEKLKEDAIANAKNDVAALSVAIASKLMQKELSLNDQQALIDAYISDLETK.

A helical transmembrane segment spans residues 11-31 (KLPLGNMLFIIISFLVLMVIL).

It belongs to the ATPase B chain family. As to quaternary structure, F-type ATPases have 2 components, F(1) - the catalytic core - and F(0) - the membrane proton channel. F(1) has five subunits: alpha(3), beta(3), gamma(1), delta(1), epsilon(1). F(0) has three main subunits: a(1), b(2) and c(10-14). The alpha and beta chains form an alternating ring which encloses part of the gamma chain. F(1) is attached to F(0) by a central stalk formed by the gamma and epsilon chains, while a peripheral stalk is formed by the delta and b chains.

It is found in the cell membrane. F(1)F(0) ATP synthase produces ATP from ADP in the presence of a proton or sodium gradient. F-type ATPases consist of two structural domains, F(1) containing the extramembraneous catalytic core and F(0) containing the membrane proton channel, linked together by a central stalk and a peripheral stalk. During catalysis, ATP synthesis in the catalytic domain of F(1) is coupled via a rotary mechanism of the central stalk subunits to proton translocation. In terms of biological role, component of the F(0) channel, it forms part of the peripheral stalk, linking F(1) to F(0). This Leuconostoc citreum (strain KM20) protein is ATP synthase subunit b.